A 100-amino-acid polypeptide reads, in one-letter code: Aspartyl/glutamyl-tRNA(Asn/Gln) amidotransferase subunit C (100 aa).

Belongs to the GatC family. As to quaternary structure, heterotrimer of A, B and C subunits.

The enzyme catalyses L-glutamyl-tRNA(Gln) + L-glutamine + ATP + H2O = L-glutaminyl-tRNA(Gln) + L-glutamate + ADP + phosphate + H(+). The catalysed reaction is L-aspartyl-tRNA(Asn) + L-glutamine + ATP + H2O = L-asparaginyl-tRNA(Asn) + L-glutamate + ADP + phosphate + 2 H(+). Allows the formation of correctly charged Asn-tRNA(Asn) or Gln-tRNA(Gln) through the transamidation of misacylated Asp-tRNA(Asn) or Glu-tRNA(Gln) in organisms which lack either or both of asparaginyl-tRNA or glutaminyl-tRNA synthetases. The reaction takes place in the presence of glutamine and ATP through an activated phospho-Asp-tRNA(Asn) or phospho-Glu-tRNA(Gln). This chain is Aspartyl/glutamyl-tRNA(Asn/Gln) amidotransferase subunit C, found in Streptococcus agalactiae serotype Ia (strain ATCC 27591 / A909 / CDC SS700).